The following is a 186-amino-acid chain: Ribosome-recycling factor (186 aa).

The protein belongs to the RRF family.

Its subcellular location is the cytoplasm. Its function is as follows. Responsible for the release of ribosomes from messenger RNA at the termination of protein biosynthesis. May increase the efficiency of translation by recycling ribosomes from one round of translation to another. The polypeptide is Ribosome-recycling factor (Cupriavidus pinatubonensis (strain JMP 134 / LMG 1197) (Cupriavidus necator (strain JMP 134))).